A 72-amino-acid chain; its full sequence is Translation initiation factor IF-1 (72 aa).

An S1-like domain is found at 1-72; sequence MSKEENIEMQ…TKGRIIFRSR (72 aa).

This sequence belongs to the IF-1 family. Component of the 30S ribosomal translation pre-initiation complex which assembles on the 30S ribosome in the order IF-2 and IF-3, IF-1 and N-formylmethionyl-tRNA(fMet); mRNA recruitment can occur at any time during PIC assembly.

The protein resides in the cytoplasm. Functionally, one of the essential components for the initiation of protein synthesis. Stabilizes the binding of IF-2 and IF-3 on the 30S subunit to which N-formylmethionyl-tRNA(fMet) subsequently binds. Helps modulate mRNA selection, yielding the 30S pre-initiation complex (PIC). Upon addition of the 50S ribosomal subunit IF-1, IF-2 and IF-3 are released leaving the mature 70S translation initiation complex. The polypeptide is Translation initiation factor IF-1 (Buchnera aphidicola subsp. Acyrthosiphon pisum (strain APS) (Acyrthosiphon pisum symbiotic bacterium)).